A 435-amino-acid chain; its full sequence is Flavonol 7-O-rhamnosyltransferase (435 aa).

Gln18 is a binding site for UDP. Gln18 is a binding site for UDP-beta-L-rhamnose. His21 functions as the Proton acceptor in the catalytic mechanism. His21 provides a ligand contact to quercetin. Catalysis depends on Asp119, which acts as the Charge relay. Positions 250, 315, 332, 336, 337, and 340 each coordinate UDP. Residues Ser250, Ala315, His332, Gly336, Ser337, and Glu340 each contribute to the UDP-beta-L-rhamnose site.

The protein belongs to the UDP-glycosyltransferase family. As to expression, highly expressed in floral buds. Expressed in stems, leaves and flowers. Expressed at low levels in roots and siliques. Expressed on the adaxial side of cotyledons and emerging leaves, in trichomes, root columella cells, and the late elongation/early differentiation zone of roots.

The catalysed reaction is quercitrin + UDP-beta-L-rhamnose = quercetin 3,7-bis-O-alpha-L-rhamnoside + UDP + H(+). It carries out the reaction quercetin 3-O-beta-D-glucoside + UDP-beta-L-rhamnose = quercetin 3-O-beta-D-glucoside-7-O-alpha-L-rhamnoside + UDP + H(+). Its pathway is flavonoid metabolism. Its function is as follows. Flavonol 7-O-rhamnosyltransferase that catalyzes the transfer of rhamnose from UDP-rhamnose to the 7-OH position of 3-O-glycosylated flavonols, such as kaempferol 3-O-rhamnoside, kaempferol 3-O-glucoside, quercetin 3-O-glucoside, quercetin 3-O-galactoside, quercetin 3-O-rhamnoside and isorhamnetin 3-O-glucoside. Is able to glycosylate the flavonols quercetin and kaempferol to yield quercetin 7-O-rhamnoside and kaempferol 7-O-rhamnoside. Shows a strict specificity for UDP-rhamnose as sugar donor. Does not act on 3-O-glycosylated anthocyanins. The accumulation of kaempferol 3-O-rhamnoside-7-O-rhamnoside inhibits basipetal auxin transport, which influences auxin distribution and plant organ development. This chain is Flavonol 7-O-rhamnosyltransferase, found in Arabidopsis thaliana (Mouse-ear cress).